A 176-amino-acid chain; its full sequence is Large ribosomal subunit protein eL20 (176 aa).

Residue Lys-11 forms a Glycyl lysine isopeptide (Lys-Gly) (interchain with G-Cter in SUMO2) linkage. The residue at position 63 (Tyr-63) is a Phosphotyrosine. Ser-71 is modified (phosphoserine). Lys-76 is subject to N6-succinyllysine. The residue at position 123 (Ser-123) is a Phosphoserine. Residues Lys-128 and Lys-170 each participate in a glycyl lysine isopeptide (Lys-Gly) (interchain with G-Cter in SUMO2) cross-link.

It belongs to the eukaryotic ribosomal protein eL20 family. As to quaternary structure, component of the large ribosomal subunit. Binds IPO9 with high affinity.

It is found in the cytoplasm. Component of the large ribosomal subunit. The ribosome is a large ribonucleoprotein complex responsible for the synthesis of proteins in the cell. In Bos taurus (Bovine), this protein is Large ribosomal subunit protein eL20 (RPL18A).